The primary structure comprises 250 residues: 2,3-bisphosphoglycerate-dependent phosphoglycerate mutase (250 aa).

Residues 10–17, 23–24, Arg62, 89–92, Lys100, 116–117, and 185–186 contribute to the substrate site; these read RHGESQWN, TG, ERHY, RR, and GN. The active-site Tele-phosphohistidine intermediate is His11. Glu89 functions as the Proton donor/acceptor in the catalytic mechanism.

The protein belongs to the phosphoglycerate mutase family. BPG-dependent PGAM subfamily. Homodimer.

It carries out the reaction (2R)-2-phosphoglycerate = (2R)-3-phosphoglycerate. The protein operates within carbohydrate degradation; glycolysis; pyruvate from D-glyceraldehyde 3-phosphate: step 3/5. Catalyzes the interconversion of 2-phosphoglycerate and 3-phosphoglycerate. In Salmonella paratyphi A (strain ATCC 9150 / SARB42), this protein is 2,3-bisphosphoglycerate-dependent phosphoglycerate mutase.